Here is a 362-residue protein sequence, read N- to C-terminus: Isopentenyl-diphosphate delta-isomerase (362 aa).

Residue 6–7 participates in substrate binding; the sequence is RK. FMN is bound by residues 65-67, serine 95, and asparagine 124; that span reads SIT. Residue 95-97 participates in substrate binding; that stretch reads SQR. Substrate is bound at residue glutamine 158. A Mg(2+)-binding site is contributed by glutamate 159. Residues lysine 189, threonine 219, 269–271, and 290–291 each bind FMN; these read GVR and AL.

It belongs to the IPP isomerase type 2 family. Homooctamer. Dimer of tetramers. It depends on FMN as a cofactor. The cofactor is NADPH. Mg(2+) is required as a cofactor.

It is found in the cytoplasm. It carries out the reaction isopentenyl diphosphate = dimethylallyl diphosphate. In terms of biological role, involved in the biosynthesis of isoprenoids. Catalyzes the 1,3-allylic rearrangement of the homoallylic substrate isopentenyl (IPP) to its allylic isomer, dimethylallyl diphosphate (DMAPP). In Methanococcoides burtonii (strain DSM 6242 / NBRC 107633 / OCM 468 / ACE-M), this protein is Isopentenyl-diphosphate delta-isomerase.